The sequence spans 193 residues: dCTP deaminase (193 aa).

DCTP-binding positions include 110-115 (RSSLAR), Asp128, 136-138 (VLE), Tyr171, Lys178, and Gln182. Catalysis depends on Glu138, which acts as the Proton donor/acceptor. The disordered stretch occupies residues 171–193 (YHQRQDAKYHNQKGAVASRIDKD).

Belongs to the dCTP deaminase family. Homotrimer.

The catalysed reaction is dCTP + H2O + H(+) = dUTP + NH4(+). It participates in pyrimidine metabolism; dUMP biosynthesis; dUMP from dCTP (dUTP route): step 1/2. Its function is as follows. Catalyzes the deamination of dCTP to dUTP. This is dCTP deaminase from Hamiltonella defensa subsp. Acyrthosiphon pisum (strain 5AT).